A 185-amino-acid polypeptide reads, in one-letter code: ATP-dependent protease subunit HslV (185 aa).

The active site involves Thr-13. Positions 167, 170, and 173 each coordinate Na(+).

This sequence belongs to the peptidase T1B family. HslV subfamily. As to quaternary structure, a double ring-shaped homohexamer of HslV is capped on each side by a ring-shaped HslU homohexamer. The assembly of the HslU/HslV complex is dependent on binding of ATP.

Its subcellular location is the cytoplasm. The catalysed reaction is ATP-dependent cleavage of peptide bonds with broad specificity.. Allosterically activated by HslU binding. Its function is as follows. Protease subunit of a proteasome-like degradation complex believed to be a general protein degrading machinery. This chain is ATP-dependent protease subunit HslV, found in Sinorhizobium medicae (strain WSM419) (Ensifer medicae).